The following is a 488-amino-acid chain: Putative serine carboxypeptidase-like 30 (488 aa).

Residues 1–28 (MDNHTKSFSSLLISLWFTALLILVEMVS) form the signal peptide. 3 cysteine pairs are disulfide-bonded: Cys99–Cys368, Cys262–Cys275, and Cys299–Cys336. Residue Asn150 is glycosylated (N-linked (GlcNAc...) asparagine). Residue Ser192 is part of the active site. Asn263 carries N-linked (GlcNAc...) asparagine glycosylation. Asn364 and Asn375 each carry an N-linked (GlcNAc...) asparagine glycan. Residues Asp405 and His457 contribute to the active site.

It belongs to the peptidase S10 family. As to expression, expression not detected.

The protein resides in the secreted. Its function is as follows. Probable carboxypeptidase. In Arabidopsis thaliana (Mouse-ear cress), this protein is Putative serine carboxypeptidase-like 30 (SCPL30).